Reading from the N-terminus, the 149-residue chain is Putative sugar phosphate isomerase YwlF (149 aa).

Residue His-9 participates in substrate binding. Catalysis depends on Cys-66, which acts as the Proton acceptor. Substrate is bound at residue 67-72; it reads GTGIGM. Residue His-99 is the Proton donor of the active site. Position 133 (Arg-133) interacts with substrate.

It belongs to the LacAB/RpiB family.

This Bacillus subtilis (strain 168) protein is Putative sugar phosphate isomerase YwlF (ywlF).